Reading from the N-terminus, the 236-residue chain is tRNA (guanine-N(7)-)-methyltransferase (236 aa).

Glutamate 43, aspartate 68, asparagine 102, and asparagine 125 together coordinate S-adenosyl-L-methionine. Residues lysine 129 and aspartate 161 each contribute to the substrate site.

This sequence belongs to the class I-like SAM-binding methyltransferase superfamily. TrmB family.

It carries out the reaction guanosine(46) in tRNA + S-adenosyl-L-methionine = N(7)-methylguanosine(46) in tRNA + S-adenosyl-L-homocysteine. The protein operates within tRNA modification; N(7)-methylguanine-tRNA biosynthesis. In terms of biological role, catalyzes the formation of N(7)-methylguanine at position 46 (m7G46) in tRNA. The chain is tRNA (guanine-N(7)-)-methyltransferase from Ruminiclostridium cellulolyticum (strain ATCC 35319 / DSM 5812 / JCM 6584 / H10) (Clostridium cellulolyticum).